Consider the following 55-residue polypeptide: Large ribosomal subunit protein bL33 (55 aa).

The span at Met1 to Leu11 shows a compositional bias: basic and acidic residues. Positions Met1–Asn26 are disordered.

It belongs to the bacterial ribosomal protein bL33 family.

In Methylibium petroleiphilum (strain ATCC BAA-1232 / LMG 22953 / PM1), this protein is Large ribosomal subunit protein bL33.